A 750-amino-acid chain; its full sequence is Neprilysin (750 aa).

Polar residues predominate over residues 1-14; it reads MGKSESQMDITDIN. Positions 1–20 are disordered; it reads MGKSESQMDITDINTPKPKK. Gly2 carries the N-myristoyl glycine lipid modification. Over 2–28 the chain is Cytoplasmic; sequence GKSESQMDITDINTPKPKKKQRWTPLE. Phosphoserine is present on residues Ser4 and Ser6. The Stop-transfer sequence motif lies at 16 to 23; it reads PKPKKKQR. A helical; Signal-anchor for type II membrane protein membrane pass occupies residues 29-51; sequence ISLSVLVLLLTIIAVTMIALYAT. Residues 52–750 lie on the Extracellular side of the membrane; it reads YDDGICKSSD…MNPEKKCRVW (699 aa). Positions 56–750 constitute a Peptidase M13 domain; it reads ICKSSDCIKS…MNPEKKCRVW (695 aa). Intrachain disulfides connect Cys57/Cys62, Cys80/Cys735, Cys88/Cys695, Cys143/Cys411, Cys234/Cys242, and Cys621/Cys747. Arg103 provides a ligand contact to a peptide. Asn145 carries N-linked (GlcNAc...) asparagine glycosylation. N-linked (GlcNAc...) asparagine glycosylation is found at Asn285 and Asn325. Zn(2+) is bound at residue His584. Residue Glu585 is part of the active site. Residue His588 coordinates Zn(2+). A glycan (N-linked (GlcNAc...) asparagine) is linked at Asn628. Glu647 lines the Zn(2+) pocket. The active-site Proton donor is Asp651.

The protein belongs to the peptidase M13 family. It depends on Zn(2+) as a cofactor. Myristoylation is a determinant of membrane targeting. In terms of processing, glycosylation at Asn-628 is necessary both for surface expression and neutral endopeptidase activity.

It is found in the cell membrane. It catalyses the reaction Preferential cleavage of polypeptides between hydrophobic residues, particularly with Phe or Tyr at P1'.. The catalysed reaction is substance P + H2O = substance P(1-9) + L-Leu-L-Met-NH2. The enzyme catalyses substance P + H2O = substance P(1-7) + L-Phe-Gly-L-Leu-L-Met-NH2. It carries out the reaction neurotensin + H2O = neurotensin(1-11) + L-isoleucyl-L-leucine. It catalyses the reaction neurotensin + H2O = neurotensin(1-10) + L-tyrosyl-L-isoleucyl-L-leucine. Inhibited in a dose dependent manner by opiorphin. Activated by K49-P1-20, a twenty-residue synthetic peptide shortened from the snake B.asper myotoxin II. In terms of biological role, thermolysin-like specificity, but is almost confined on acting on polypeptides of up to 30 amino acids. Biologically important in the destruction of opioid peptides such as Met- and Leu-enkephalins by cleavage of a Gly-Phe bond. Catalyzes cleavage of bradykinin, substance P and neurotensin peptides. Able to cleave angiotensin-1, angiotensin-2 and angiotensin 1-9. Involved in the degradation of atrial natriuretic factor (ANF) and brain natriuretic factor (BNP(1-32)). Displays UV-inducible elastase activity toward skin preelastic and elastic fibers. The chain is Neprilysin from Homo sapiens (Human).